A 679-amino-acid polypeptide reads, in one-letter code: HEAT repeat-containing protein 3 (679 aa).

Residues 1–11 (MGKSRTKRFKR) are compositionally biased toward basic residues. Residues 1–40 (MGKSRTKRFKRPQFSPIESCQAEAAAASNGTGDEEDDGPA) are disordered. Ser15 is subject to Phosphoserine. 2 HEAT repeats span residues 38–69 (GPAA…VQQR) and 74–110 (DLAR…SACG). Ser144 is subject to Phosphoserine. Residue Thr339 is modified to Phosphothreonine.

The protein belongs to the nuclear import and ribosome assembly adapter family. In terms of assembly, component of a hexameric 5S RNP precursor complex, composed of 5S RNA, RRS1, RPF2/BXDC1, RPL5, RPL11 and HEATR3; this complex acts as a precursor for ribosome assembly.

Plays a role in ribosome biogenesis and in nuclear import of the 60S ribosomal protein L5/large ribosomal subunit protein uL18 (RPL5). Required for proper erythrocyte maturation. This is HEAT repeat-containing protein 3 (Heatr3) from Mus musculus (Mouse).